A 416-amino-acid chain; its full sequence is Gamma-glutamyl phosphate reductase (416 aa).

It belongs to the gamma-glutamyl phosphate reductase family.

The protein resides in the cytoplasm. The enzyme catalyses L-glutamate 5-semialdehyde + phosphate + NADP(+) = L-glutamyl 5-phosphate + NADPH + H(+). It functions in the pathway amino-acid biosynthesis; L-proline biosynthesis; L-glutamate 5-semialdehyde from L-glutamate: step 2/2. Functionally, catalyzes the NADPH-dependent reduction of L-glutamate 5-phosphate into L-glutamate 5-semialdehyde and phosphate. The product spontaneously undergoes cyclization to form 1-pyrroline-5-carboxylate. This Vibrio vulnificus (strain CMCP6) protein is Gamma-glutamyl phosphate reductase.